The sequence spans 169 residues: MSTAQVPYLNCIRNTLTASMCLQNFGSQIVERHNKPEVEVKTSKELVLNPVIIARNKNERVLIETSINSIRISVSIKKSDEVDVILAKKFVRFLQQRAENFIILRRKPVEGYDISFLVTNFHTENMFKHKLVDFIIQFMEDIDREISDLKLTLNARGRIVASEYLKNFA.

This sequence belongs to the ARPC4 family. Component of the Arp2/3 complex composed of arpB/Arp2, arpC/Arp3, arcA/p41-arc, arcB/p34-arc, arcC/p21-arc, arcD/p20-arc and arcE/p16-arc. Interacts with carmil (via the region between the LRR domain and COOH-terminal proline-rich domain); carmil is required for Arp2/3-dependent actin nucleation. Arp2/3 complex, MyoB, MyoC, and the alpha and beta subunits of capping protein all form a larger complex with carmil.

Its subcellular location is the cytoplasm. It is found in the cytoskeleton. The protein resides in the cytosol. It localises to the cell cortex. The protein localises to the cell projection. Its subcellular location is the pseudopodium. Functions as a component of the Arp2/3 complex which is involved in regulation of actin polymerization and together with an activating nucleation-promoting factor (NPF) mediates the formation of branched actin networks. Seems to contact the pointed end of the daughter actin filament. The Arp2/3 complex is involved in organizing the actin system in cell motility and chemotaxis, in phagocytosis and macropinocytosis, at late steps of endosome processing, and in mitosis. In concert with a group of other proteins, the Arp2/3 complex plays a general role in the rapid activation and adaptation of the actin system to its multiple functions. The protein is Actin-related protein 2/3 complex subunit 4 (arcD) of Dictyostelium discoideum (Social amoeba).